We begin with the raw amino-acid sequence, 241 residues long: ATP synthase subunit a (241 aa).

The next 5 helical transmembrane spans lie at 30–50, 91–111, 128–148, 193–213, and 214–234; these read GQVF…VVVG, FIGT…LVPW, INTT…AGLS, LVVA…VMFL, and GLFT…YYIG.

The protein belongs to the ATPase A chain family. F-type ATPases have 2 components, CF(1) - the catalytic core - and CF(0) - the membrane proton channel. CF(1) has five subunits: alpha(3), beta(3), gamma(1), delta(1), epsilon(1). CF(0) has four main subunits: a, b, b' and c.

It is found in the cellular thylakoid membrane. Key component of the proton channel; it plays a direct role in the translocation of protons across the membrane. This Prochlorococcus marinus (strain MIT 9211) protein is ATP synthase subunit a.